A 139-amino-acid chain; its full sequence is ATP synthase epsilon chain (139 aa).

Belongs to the ATPase epsilon chain family. As to quaternary structure, F-type ATPases have 2 components, CF(1) - the catalytic core - and CF(0) - the membrane proton channel. CF(1) has five subunits: alpha(3), beta(3), gamma(1), delta(1), epsilon(1). CF(0) has three main subunits: a, b and c.

It localises to the cell membrane. Functionally, produces ATP from ADP in the presence of a proton gradient across the membrane. The polypeptide is ATP synthase epsilon chain (Symbiobacterium thermophilum (strain DSM 24528 / JCM 14929 / IAM 14863 / T)).